Consider the following 491-residue polypeptide: MNTQQLAKLRSIVPEMRRVRHIHFVGIGGAGMGGIAEVLANEGYQISGSDLAPNPVTQQLMNLGATIYFNHRPENVRDASVVVVSSAISADNPEIVAAHEARIPVIRRAEMLAELMRFRHGIAIAGTHGKTTTTAMVSSIYAEAGLDPTFVNGGLVKAAGVHARLGHGRYLIAEADESDASFLHLQPMVAIVTNIEADHMDTYQGDFENLKQTFINFLHNLPFYGRAVMCVDDPVIRELLPRVGRQTTTYGFSEDADVRVEDYQQIGPQGHFTLLRQDKEPMRVTLNAPGRHNALNAAAAVAVATEEGIDDEAILRALESFQGTGRRFDFLGEFPLEPVNGKSGTAMLVDDYGHHPTEVDATIKAARAGWPDKNLVMLFQPHRFTRTRDLYDDFANVLTQVDTLLMLEVYPAGEAPIPGADSRSLCRTIRGRGKIDPILVPDPARVAEMLAPVLTGNDLILVQGAGNIGKIARSLAEIKLKPQTPEEEQHD.

An ATP-binding site is contributed by 126–132 (GTHGKTT).

The protein belongs to the MurCDEF family.

The protein localises to the cytoplasm. The enzyme catalyses UDP-N-acetyl-alpha-D-muramate + L-alanine + ATP = UDP-N-acetyl-alpha-D-muramoyl-L-alanine + ADP + phosphate + H(+). It participates in cell wall biogenesis; peptidoglycan biosynthesis. Functionally, cell wall formation. The protein is UDP-N-acetylmuramate--L-alanine ligase of Escherichia coli (strain K12 / MC4100 / BW2952).